The primary structure comprises 92 residues: Small ribosomal subunit protein uS15c (92 aa).

It belongs to the universal ribosomal protein uS15 family. Part of the 30S ribosomal subunit.

Its subcellular location is the plastid. The protein resides in the chloroplast. The chain is Small ribosomal subunit protein uS15c (rps15) from Guizotia abyssinica (Niger).